Here is a 175-residue protein sequence, read N- to C-terminus: NADH dehydrogenase [ubiquinone] iron-sulfur protein 4, mitochondrial (175 aa).

The N-terminal 42 residues, 1 to 42, are a transit peptide targeting the mitochondrion; that stretch reads MAAVSISVSLRQAMLGRRAMATAAVSVCRVPSRLLSTSTWKL. Position 173 is a phosphoserine (serine 173).

This sequence belongs to the complex I NDUFS4 subunit family. In terms of assembly, this is a component of the iron-sulfur (IP) fragment of the enzyme. Interacts with BCAP31 and TOMM40; the interaction mediates its translocation to the mitochondria; the interaction with BCAP31 is direct.

The protein resides in the mitochondrion inner membrane. Accessory subunit of the mitochondrial membrane respiratory chain NADH dehydrogenase (Complex I), that is believed not to be involved in catalysis. Complex I functions in the transfer of electrons from NADH to the respiratory chain. The immediate electron acceptor for the enzyme is believed to be ubiquinone. This is NADH dehydrogenase [ubiquinone] iron-sulfur protein 4, mitochondrial (Ndufs4) from Mus musculus (Mouse).